A 541-amino-acid polypeptide reads, in one-letter code: Tyrosine-protein kinase Yes (541 aa).

The N-myristoyl glycine moiety is linked to residue G2. Residue C3 is the site of S-palmitoyl cysteine; in membrane form attachment. Position 32 is a phosphotyrosine (Y32). In terms of domain architecture, SH3 spans G89–S150. The SH2 domain occupies W156–C253. The region spanning L275–F528 is the Protein kinase domain. ATP contacts are provided by residues L281–V289 and K303. A phosphotyrosine mark is found at Y334 and Y343. D394 serves as the catalytic Proton acceptor. The residue at position 424 (Y424) is a Phosphotyrosine; by autocatalysis. Residue Y535 is modified to Phosphotyrosine.

Belongs to the protein kinase superfamily. Tyr protein kinase family. SRC subfamily. Interacts with YAP1. Interacts with FASLG. Interacts with CTNND1; this interaction allows YES1-mediated activation of FYN and FER and subsequent phosphorylation of CTNND1. Interacts with CSF1R. Interacts with IL6ST/gp130. Interacts with SCRIB, when YES1 is in a closed conformation; the interaction facilitates YES1 autophosphorylation. In terms of processing, phosphorylated. Phosphorylation by CSK on the C-terminal tail maintains the enzyme in an inactive state. Autophosphorylation at Tyr-424 maintains enzyme activity by blocking CSK-mediated inhibition. Palmitoylation at Cys-3 promotes membrane localization.

It is found in the cell membrane. It localises to the cytoplasm. The protein resides in the cytoskeleton. Its subcellular location is the microtubule organizing center. The protein localises to the centrosome. It is found in the cytosol. It localises to the cell junction. It carries out the reaction L-tyrosyl-[protein] + ATP = O-phospho-L-tyrosyl-[protein] + ADP + H(+). Its function is as follows. Non-receptor protein tyrosine kinase that is involved in the regulation of cell growth and survival, apoptosis, cell-cell adhesion, cytoskeleton remodeling, and differentiation. Stimulation by receptor tyrosine kinases (RTKs) including EGFR, PDGFR, CSF1R and FGFR leads to recruitment of YES1 to the phosphorylated receptor, and activation and phosphorylation of downstream substrates. Upon EGFR activation, promotes the phosphorylation of PARD3 to favor epithelial tight junction assembly. Participates in the phosphorylation of specific junctional components such as CTNND1 by stimulating the FYN and FER tyrosine kinases at cell-cell contacts. Upon T-cell stimulation by CXCL12, phosphorylates collapsin response mediator protein 2/DPYSL2 and induces T-cell migration. Participates in CD95L/FASLG signaling pathway and mediates AKT-mediated cell migration. Plays a role in cell cycle progression by phosphorylating the cyclin dependent kinase 4/CDK4 thus regulating the G1 phase. Also involved in G2/M progression and cytokinesis. Catalyzes phosphorylation of organic cation transporter OCT2 which induces its transport activity. The chain is Tyrosine-protein kinase Yes (Yes1) from Mus musculus (Mouse).